Reading from the N-terminus, the 170-residue chain is uncharacterized protein (170 aa).

This is an uncharacterized protein from Arabidopsis thaliana (Mouse-ear cress).